A 307-amino-acid chain; its full sequence is MISAKMVKDLREKTGAGMMDCKKALTECDGDLEKAVEVLREKGLAAAAKKSGRVAAEGIVSTYISEDMKNGSIVEFNCETDFVSVNELFVELANNLSKQAAFSNVSTAEELLEEKYIADESKLVKDVITELIAKLGENMNLRRIAKLSVDKGVITSYIHGGGRIGVLVKLACEKEDAKLAEIAKDVAMQVAATNPLFLNRDGVDTDTLEKEKEIYRVQALNEGKPEKVVEKMVMGRINKYYKENCLVEQLWVKNGDYTITKYLQEQSKEIGADITVEAFVRYEKGEGIEKKEEDFAEEVQRQMNQGK.

Residues 80-83 are involved in Mg(2+) ion dislocation from EF-Tu; the sequence is TDFV.

It belongs to the EF-Ts family.

The protein resides in the cytoplasm. Its function is as follows. Associates with the EF-Tu.GDP complex and induces the exchange of GDP to GTP. It remains bound to the aminoacyl-tRNA.EF-Tu.GTP complex up to the GTP hydrolysis stage on the ribosome. The polypeptide is Elongation factor Ts (Clostridium botulinum (strain Kyoto / Type A2)).